The following is a 219-amino-acid chain: Thiopurine S-methyltransferase (219 aa).

S-adenosyl-L-methionine is bound by residues Trp10, Leu45, Glu66, and Arg123.

Belongs to the class I-like SAM-binding methyltransferase superfamily. TPMT family.

It localises to the cytoplasm. It catalyses the reaction S-adenosyl-L-methionine + a thiopurine = S-adenosyl-L-homocysteine + a thiopurine S-methylether.. This chain is Thiopurine S-methyltransferase, found in Marinobacter nauticus (strain ATCC 700491 / DSM 11845 / VT8) (Marinobacter aquaeolei).